Reading from the N-terminus, the 301-residue chain is Fatty acid elongase 3 (301 aa).

Transmembrane regions (helical) follow at residues 31–51 (VPYI…KSIM), 64–84 (IVWN…TVPY), 122–142 (ALAD…LFAL), 161–181 (VIFL…FAYV), 187–207 (GLWF…YYFV), 219–239 (FAPI…IVVC), and 257–277 (FSLH…SQLF). A HxxHH motif motif is present at residues 165 to 169 (HWYHH). The Nucleophile role is filled by H168.

This sequence belongs to the ELO family.

It is found in the endoplasmic reticulum membrane. The enzyme catalyses an acyl-CoA + malonyl-CoA + H(+) = a 3-oxoacyl-CoA + CO2 + CoA. Its pathway is lipid metabolism; fatty acid biosynthesis. Its function is as follows. Involved in the synthesis of fatty acids. Elongates C14 fatty acids to C18. This Trypanosoma brucei brucei (strain 927/4 GUTat10.1) protein is Fatty acid elongase 3.